The sequence spans 255 residues: tRNA (guanine-N(1)-)-methyltransferase (255 aa).

Residues Gly117 and 137-142 contribute to the S-adenosyl-L-methionine site; that span reads LGDFVL.

The protein belongs to the RNA methyltransferase TrmD family. As to quaternary structure, homodimer.

The protein localises to the cytoplasm. The enzyme catalyses guanosine(37) in tRNA + S-adenosyl-L-methionine = N(1)-methylguanosine(37) in tRNA + S-adenosyl-L-homocysteine + H(+). Its function is as follows. Specifically methylates guanosine-37 in various tRNAs. This is tRNA (guanine-N(1)-)-methyltransferase from Paraburkholderia xenovorans (strain LB400).